Reading from the N-terminus, the 237-residue chain is tRNA (guanine-N(7)-)-methyltransferase (237 aa).

E65, E90, D117, and D140 together coordinate S-adenosyl-L-methionine. D140 is an active-site residue. Residues K144, D176, and 212–215 (TKFE) contribute to the substrate site. The interval 197–217 (TCGPRQFSPRGERPETKFERR) is disordered. Residues 206 to 217 (RGERPETKFERR) are compositionally biased toward basic and acidic residues.

It belongs to the class I-like SAM-binding methyltransferase superfamily. TrmB family.

It catalyses the reaction guanosine(46) in tRNA + S-adenosyl-L-methionine = N(7)-methylguanosine(46) in tRNA + S-adenosyl-L-homocysteine. It functions in the pathway tRNA modification; N(7)-methylguanine-tRNA biosynthesis. In terms of biological role, catalyzes the formation of N(7)-methylguanine at position 46 (m7G46) in tRNA. This Alkalilimnicola ehrlichii (strain ATCC BAA-1101 / DSM 17681 / MLHE-1) protein is tRNA (guanine-N(7)-)-methyltransferase.